We begin with the raw amino-acid sequence, 576 residues long: MAIHTCFSLIPSSFSSPKLPYPKNTTFQSPIPKLSRPTFMFDRKGSFQNGTAAVPAVGEDFPIDYADWLPKRDPNDRRRAGILLHPTSFPGPYGIGDLGPQAFKFLDWLHLAGCSLWQVLPLVPPGKRGNEDGSPYSGQDANCGNTLLISLEELVDDGLLKMEELPEPLPTDRVNYSTISEIKDPLITKAAKRLLSSEGELKDQLENFRRDPNISSWLEDAAYFAAIDNSVNTISWYDWPEPLKNRHLAALEEVYQSEKDFIDIFIAQQFLFQRQWKKVRDYARSKGISIMGDMPIYVGYHSADVWANKKQFLLNRKGFPLIVSGVPPDAFSETGQLWGSPLYDWKAMEKDGFSWWVRRIQRATDLFDEFRIDHFRGFAGFWAVPSEEKIAILGRWKVGPGKPLFDAILQAVGKINIIAEDLGVITEDVVQLRKSIEAPGMAVLQFAFGSDAENPHLPHNHEQNQVVYTGTHDNDTIRGWWDTLPQEEKSNVLKYLSNIEEEEISRGLIEGAVSSVARIAIIPMQDVLGLGSDSRMNIPATQFGNWSWRIPSSTSFDNLDAEAKKLRDILATYGRL.

The N-terminal 52 residues, 1–52 (MAIHTCFSLIPSSFSSPKLPYPKNTTFQSPIPKLSRPTFMFDRKGSFQNGTA), are a transit peptide targeting the chloroplast.

This sequence belongs to the disproportionating enzyme family. As to expression, present in leaves, stems, roots, and stolons but is most abundant in developing and mature tubers.

The protein resides in the plastid. The protein localises to the chloroplast. It is found in the amyloplast. It carries out the reaction Transfers a segment of a (1-&gt;4)-alpha-D-glucan to a new position in an acceptor, which may be glucose or a (1-&gt;4)-alpha-D-glucan.. Functionally, may act during starch breakdown to convert small oligosaccharides into larger molecules upon which starch phosphorylase can act, or may change the structure of starch molecules and grain architecture by modifying chain length, or may generate from starch and glucose oligosaccharides which can serve either as primers for new starch phosphoenzyme. The protein is 4-alpha-glucanotransferase, chloroplastic/amyloplastic (DPEP) of Solanum tuberosum (Potato).